Consider the following 225-residue polypeptide: C-reactive protein (225 aa).

The N-terminal stretch at 1–20 is a signal peptide; the sequence is MEKLLWCFLTLVSFSNMSDQ. The 202-residue stretch at 24 to 225 folds into the Pentraxin (PTX) domain; that stretch reads HKKAFVFPKE…EVHVKPQLWP (202 aa). Cysteine 55 and cysteine 116 are oxidised to a cystine. Residues asparagine 80, glutamine 158, aspartate 159, and glutamine 169 each contribute to the Ca(2+) site.

Belongs to the pentraxin family. Homopentamer. Pentraxin (or pentaxin) have a discoid arrangement of 5 non-covalently bound subunits. Interacts with FCN1; may regulate monocyte activation by FCN1. Ca(2+) is required as a cofactor. In terms of tissue distribution, found in plasma.

It localises to the secreted. In terms of biological role, displays several functions associated with host defense: it promotes agglutination, bacterial capsular swelling, phagocytosis and complement fixation through its calcium-dependent binding to phosphorylcholine. Can interact with DNA and histones and may scavenge nuclear material released from damaged circulating cells. This Oryctolagus cuniculus (Rabbit) protein is C-reactive protein (CRP).